The sequence spans 520 residues: 5'-nucleotidase domain-containing protein 2 (520 aa).

Catalysis depends on Asp-73, which acts as the Nucleophile. 3 residues coordinate Mg(2+): Asp-73, Asp-75, and Asp-358. The active-site Proton donor is the Asp-75.

This sequence belongs to the 5'(3')-deoxyribonucleotidase family. In terms of assembly, interacts with tyrosine 3-monooxygenase TH; the interaction results in reduced phosphorylation and decreased catalytic activity of TH.

The protein resides in the cytoplasm. Promotes dephosphorylation of tyrosine 3-monooxygenase TH which decreases TH catalytic activity and leads to reduced synthesis of catecholamines including dopamine, noradrenaline and adrenaline. The exact mechanism of activity is unknown but may act as a phosphatase or promote the activity of phosphatases or may inhibit phosphorylation by acting as a barrier to interfere with protein kinase access. The sequence is that of 5'-nucleotidase domain-containing protein 2 (NT5DC2) from Homo sapiens (Human).